A 417-amino-acid polypeptide reads, in one-letter code: Gamma-glutamyl phosphate reductase (417 aa).

The protein belongs to the gamma-glutamyl phosphate reductase family.

The protein resides in the cytoplasm. The catalysed reaction is L-glutamate 5-semialdehyde + phosphate + NADP(+) = L-glutamyl 5-phosphate + NADPH + H(+). Its pathway is amino-acid biosynthesis; L-proline biosynthesis; L-glutamate 5-semialdehyde from L-glutamate: step 2/2. In terms of biological role, catalyzes the NADPH-dependent reduction of L-glutamate 5-phosphate into L-glutamate 5-semialdehyde and phosphate. The product spontaneously undergoes cyclization to form 1-pyrroline-5-carboxylate. This chain is Gamma-glutamyl phosphate reductase, found in Haemophilus influenzae (strain PittEE).